A 128-amino-acid chain; its full sequence is Small ribosomal subunit protein uS11 (128 aa).

It belongs to the universal ribosomal protein uS11 family. In terms of assembly, part of the 30S ribosomal subunit. Interacts with proteins S7 and S18. Binds to IF-3.

In terms of biological role, located on the platform of the 30S subunit, it bridges several disparate RNA helices of the 16S rRNA. Forms part of the Shine-Dalgarno cleft in the 70S ribosome. The protein is Small ribosomal subunit protein uS11 of Phytoplasma australiense.